The chain runs to 123 residues: Ribosome-binding factor A (123 aa).

The protein belongs to the RbfA family. In terms of assembly, monomer. Binds 30S ribosomal subunits, but not 50S ribosomal subunits or 70S ribosomes.

It localises to the cytoplasm. Its function is as follows. One of several proteins that assist in the late maturation steps of the functional core of the 30S ribosomal subunit. Associates with free 30S ribosomal subunits (but not with 30S subunits that are part of 70S ribosomes or polysomes). Required for efficient processing of 16S rRNA. May interact with the 5'-terminal helix region of 16S rRNA. This chain is Ribosome-binding factor A, found in Syntrophus aciditrophicus (strain SB).